A 215-amino-acid chain; its full sequence is Porin MspB (215 aa).

Residues 1–31 (MTAFKRVLIAMISALLAGTTGMFVSAGAAHA) form the signal peptide.

Belongs to the mycobacterial porin (TC 1.B.24) family. Octamers. Probably forms a goblet with the wide end on the exterior of the outer membrane and a central channel. It is not known if mixed oligomers of MspB with other Msp subunits form in vivo.

Its subcellular location is the cell outer membrane. The protein localises to the secreted. It localises to the cell wall. Its function is as follows. A backup porin induced when MspA, the major porin, is deleted. Probably forms a water-filled channel which favors the permeation of cations. There are about 2400 porins in wild-type, 800 in an mspA deletion and 150 in a double mspA-mspC deletion. A triple mspA-mspC-mspD deletion mutant has low but detectable channel activity. Different conductance values with maxima at 2.3 and 4.6 nanosiemens might be caused by a simultaneous reconstitution of MspB channels into the membrane or by the existence of different MspB conformations. This Mycolicibacterium smegmatis (strain ATCC 700084 / mc(2)155) (Mycobacterium smegmatis) protein is Porin MspB (mspB).